The following is a 238-amino-acid chain: Chromosome partition protein MukE (238 aa).

Positions 206–238 (EESSQSSFDLDENEKLSDISAEEQHELELEGDA) are disordered. The segment covering 218–238 (NEKLSDISAEEQHELELEGDA) has biased composition (basic and acidic residues).

It belongs to the MukE family. In terms of assembly, interacts, and probably forms a ternary complex, with MukF and MukB. The complex formation is stimulated by calcium or magnesium.

It localises to the cytoplasm. Its subcellular location is the nucleoid. Involved in chromosome condensation, segregation and cell cycle progression. May participate in facilitating chromosome segregation by condensation DNA from both sides of a centrally located replisome during cell division. Probably acts via its interaction with MukB and MukF. The sequence is that of Chromosome partition protein MukE from Aliivibrio salmonicida (strain LFI1238) (Vibrio salmonicida (strain LFI1238)).